The sequence spans 654 residues: MASINVKFPDGAEKQFDAGVTTEAIAKSISPSLAKRSVAGKFNDQIVDYRQPLTTDGSIEIIAADSEDGLNVLRQTAAQVLANAVKQLFPNIHFGSGEGNANGFFFDTDNPDEDGKQVSEDDLEAISDKMAAIIKQDLPIEREVLSKADALALVGDNPYQQDLVNERAAANNDQVVVYKQGDFVDLSDGAQLASTGKVKVFKLLSVAGAYWQGKSSNPMLQRIYGTAFLKQKDLDADLKRRQEARERDHRVIGNELDLFFVDPKVGNGLPYWMPNGATIRRQIERYIIDKEVANGYQHVYTPVLANLDVYKQSGHWDHYREDMFPPMDMGDGEQLELRPMNCPSHIQIYNHHIRSYRELPLRIAELGMMHRYEKSGALTGLSRVREMTLNDGHTFVALDQIEEEFKKILSLMVEVYEDFDISDYRFRLSYRDPENKEKYFDDDAMWERSQKMLKSAMDDMGLDYFEAEGEAAFYGPKLDVQTKTALGGEETLSTIQLDFLLPERFDLKYVGADGEEHRPVMIHRGLVSTMERFVAYLTEIYKGAFPTWLAPKQVTIIPVNNGAHGAYAETVRRRLAAEGVRVSIDDRNEKMGYKIRESQTKKVPYLLVVGDQEVANGSVSVRKYGEERTESEAVDMFIGAITQEIKHYSRGASK.

The region spanning 1–63 (MASINVKFPD…TTDGSIEIIA (63 aa)) is the TGS domain. Residues 248 to 546 (DHRVIGNELD…LTEIYKGAFP (299 aa)) are catalytic. Zn(2+) is bound by residues Cys-342, His-393, and His-523.

This sequence belongs to the class-II aminoacyl-tRNA synthetase family. In terms of assembly, homodimer. Zn(2+) is required as a cofactor.

The protein localises to the cytoplasm. It catalyses the reaction tRNA(Thr) + L-threonine + ATP = L-threonyl-tRNA(Thr) + AMP + diphosphate + H(+). Functionally, catalyzes the attachment of threonine to tRNA(Thr) in a two-step reaction: L-threonine is first activated by ATP to form Thr-AMP and then transferred to the acceptor end of tRNA(Thr). Also edits incorrectly charged L-seryl-tRNA(Thr). The polypeptide is Threonine--tRNA ligase (Lactiplantibacillus plantarum (strain ATCC BAA-793 / NCIMB 8826 / WCFS1) (Lactobacillus plantarum)).